The chain runs to 78 residues: Large ribosomal subunit protein bL28 (78 aa).

The protein belongs to the bacterial ribosomal protein bL28 family.

In Thiobacillus denitrificans (strain ATCC 25259 / T1), this protein is Large ribosomal subunit protein bL28.